The sequence spans 212 residues: ECF RNA polymerase sigma factor SigD (212 aa).

Residues 49 to 119 (ETIRPIVVRY…VADAHRAAGR (71 aa)) are sigma-70 factor domain-2. Positions 75 to 78 (DVAQ) match the Polymerase core binding motif. A sigma-70 factor domain-4 region spans residues 152-201 (NELLEILPAKQREILILRVVVGLSAEETAAAVGSTTGAVRVAQHRALQRL). The H-T-H motif DNA-binding region spans 176–195 (AEETAAAVGSTTGAVRVAQH).

Belongs to the sigma-70 factor family. ECF subfamily. As to quaternary structure, interacts transiently with the RNA polymerase catalytic core formed by RpoA, RpoB, RpoC and RpoZ (2 alpha, 1 beta, 1 beta' and 1 omega subunit) to form the RNA polymerase holoenzyme that can initiate transcription. Interacts (via sigma-70 factor domain 4) with RsdA.

Its function is as follows. Sigma factors are initiation factors that promote the attachment of RNA polymerase to specific initiation sites and are then released. Extracytoplasmic function (ECF) sigma factors are held in an inactive form by an anti-sigma factor until released by regulated intramembrane proteolysis. The chain is ECF RNA polymerase sigma factor SigD (sigD) from Mycobacterium bovis (strain ATCC BAA-935 / AF2122/97).